The chain runs to 361 residues: MNNQDLINDKSKNGLTYAKAGVNIDMGNAMVEKIKPFIRATKRAGTDAEIGGFGGLFDLKAAGFTDPILVAANDGVGTKLKIAIEVGIHDTIGIDLVAMCVNDLLVQGAEPLFFLDYFATGKLDPEQGAAIVSGIAKGCQQAGAALIGGETAEMPDMYAKGDYDLAGFAVGAAERSALLPSKDLTEGDIILGLSSSGIHSNGFSLVRRIIQQSDLKWNDHAPFNPQMNLGTALLTPTRIYVKSLLPIIKSYKGIKALAHITGGGFLENIPRVLPSSLCAEINLSAIHVPSIFSWIAKQGKIEKIEMLRTFNCGVGMIIIVAQHEVEKVTQELKMQGETVTLLGKLTKRQNKGITFKGALHL.

The protein belongs to the AIR synthase family.

It localises to the cytoplasm. The enzyme catalyses 2-formamido-N(1)-(5-O-phospho-beta-D-ribosyl)acetamidine + ATP = 5-amino-1-(5-phospho-beta-D-ribosyl)imidazole + ADP + phosphate + H(+). Its pathway is purine metabolism; IMP biosynthesis via de novo pathway; 5-amino-1-(5-phospho-D-ribosyl)imidazole from N(2)-formyl-N(1)-(5-phospho-D-ribosyl)glycinamide: step 2/2. The polypeptide is Phosphoribosylformylglycinamidine cyclo-ligase (Bartonella henselae (strain ATCC 49882 / DSM 28221 / CCUG 30454 / Houston 1) (Rochalimaea henselae)).